A 136-amino-acid chain; its full sequence is 1,4-dihydroxy-2-naphthoyl-CoA hydrolase (136 aa).

Glu63 serves as the catalytic Nucleophile or proton acceptor. Substrate contacts are provided by residues Gly82, 89 to 92 (HVRS), and 106 to 111 (HLGSRH).

It belongs to the thioesterase PaaI family. Homotetramer. Dimer of dimers.

It catalyses the reaction 1,4-dihydroxy-2-naphthoyl-CoA + H2O = 1,4-dihydroxy-2-naphthoate + CoA + H(+). Its pathway is quinol/quinone metabolism; 1,4-dihydroxy-2-naphthoate biosynthesis; 1,4-dihydroxy-2-naphthoate from chorismate: step 7/7. The protein operates within quinol/quinone metabolism; menaquinone biosynthesis. In terms of biological role, catalyzes the hydrolysis of 1,4-dihydroxy-2-naphthoyl-CoA (DHNA-CoA) to 1,4-dihydroxy-2-naphthoate (DHNA). Also shows significant activity toward a wide range of acyl-CoA thioesters, and minimal activity toward benzoyl-holoEntB. The protein is 1,4-dihydroxy-2-naphthoyl-CoA hydrolase of Escherichia coli (strain K12).